Consider the following 208-residue polypeptide: Imidazoleglycerol-phosphate dehydratase (208 aa).

It belongs to the imidazoleglycerol-phosphate dehydratase family.

It carries out the reaction D-erythro-1-(imidazol-4-yl)glycerol 3-phosphate = 3-(imidazol-4-yl)-2-oxopropyl phosphate + H2O. The protein operates within amino-acid biosynthesis; L-histidine biosynthesis; L-histidine from 5-phospho-alpha-D-ribose 1-diphosphate: step 6/9. This is Imidazoleglycerol-phosphate dehydratase (his3) from Trichoderma harzianum (Hypocrea lixii).